We begin with the raw amino-acid sequence, 608 residues long: 2',5'-phosphodiesterase 12 (608 aa).

The N-terminal 16 residues, 1 to 16 (MWRLPGRSALRGVRSV), are a transit peptide targeting the mitochondrion. Basic residues predominate over residues 90–99 (AAKKSRKNRA). Positions 90 to 111 (AAKKSRKNRAHSSGGAACEATG) are disordered. Residue serine 216 is modified to Phosphoserine. Mg(2+)-binding residues include glutamate 350, aspartate 495, and asparagine 497. Aspartate 495 acts as the Proton donor/acceptor in catalysis.

This sequence belongs to the CCR4/nocturin family. Requires Mg(2+) as cofactor.

The protein localises to the mitochondrion matrix. It catalyses the reaction Exonucleolytic cleavage of poly(A) to 5'-AMP.. Enzyme that cleaves 2',5'-phosphodiester bond linking adenosines of the 5'-triphosphorylated oligoadenylates, triphosphorylated oligoadenylates referred as 2-5A modulates the 2-5A system. Degrades triphosphorylated 2-5A to produce AMP and ATP. Also cleaves 3',5'-phosphodiester bond of oligoadenylates. Plays a role as a negative regulator of the 2-5A system that is one of the major pathways for antiviral and antitumor functions induced by interferons (IFNs). Suppression of this enzyme increases cellular 2-5A levels and decreases viral replication in cultured small-airway epithelial cells. The polypeptide is 2',5'-phosphodiesterase 12 (Pde12) (Mus musculus (Mouse)).